Reading from the N-terminus, the 534-residue chain is Peptide chain release factor 3 (534 aa).

Positions 9–278 constitute a tr-type G domain; that stretch reads ARRRTFAIIS…FFVEHAPPPQ (270 aa). Residues 18–25, 86–90, and 140–143 each bind GTP; these read SHPDAGKT, DTPGH, and NKLD.

This sequence belongs to the TRAFAC class translation factor GTPase superfamily. Classic translation factor GTPase family. PrfC subfamily.

It localises to the cytoplasm. Functionally, increases the formation of ribosomal termination complexes and stimulates activities of RF-1 and RF-2. It binds guanine nucleotides and has strong preference for UGA stop codons. It may interact directly with the ribosome. The stimulation of RF-1 and RF-2 is significantly reduced by GTP and GDP, but not by GMP. The polypeptide is Peptide chain release factor 3 (Xanthomonas euvesicatoria pv. vesicatoria (strain 85-10) (Xanthomonas campestris pv. vesicatoria)).